The primary structure comprises 647 residues: Pre-mRNA-splicing factor SLU7 (647 aa).

Over residues 1–19 the composition is skewed to polar residues; the sequence is MASYKQNLPPSALIKQQVN. Residues 1–44 are disordered; the sequence is MASYKQNLPPSALIKQQVNVADKKSKAEVQRDRQLEEDRKAGTA. A compositionally biased stretch (basic and acidic residues) spans 21-41; sequence ADKKSKAEVQRDRQLEEDRKA. A CCHC-type zinc finger spans residues 113 to 130; the sequence is GACENCGAMGHQKRDCFD. Disordered stretches follow at residues 193–212 and 465–620; these read HEMKEGEVEPATTEDGAPKD and EVKE…KEME. The span at 465-479 shows a compositional bias: basic and acidic residues; that stretch reads EVKEEKEKEDSIKDE. The span at 480-491 shows a compositional bias: acidic residues; that stretch reads VAEENSDNDNDE. Positions 513-533 are enriched in basic and acidic residues; it reads EKEREKERLIEKERRERDQRR. Residues 534 to 555 show a composition bias toward basic residues; the sequence is RDKKREKRERKKAKLGKRKRRH. Over residues 588-606 the composition is skewed to basic and acidic residues; the sequence is EKAEGMKAAREGDRGRKYN.

It belongs to the SLU7 family.

The protein resides in the nucleus. Its function is as follows. Participates in the second catalytic step of pre-mRNA splicing, when the free hydroxyl group of exon I attacks the 3'-splice site to generate spliced mRNA and the excised lariat intron. The polypeptide is Pre-mRNA-splicing factor SLU7 (Caenorhabditis elegans).